A 361-amino-acid polypeptide reads, in one-letter code: MVHAETFSRPLSRNEVVGLIFRLTIFGAVTYFTIKWMVDAIDPTRKQKVEAQKQAEKLMKQIGVKNVKLSEYEMSIAAHLVDPLNMHVTWSDIAGLDDVITDLKDTVILPIKKKHLFENSRLLQPPKGVLLYGPPGCGKTLIAKATAKEAGCRFINLQPSTLTDKWYGESQKLAAAVFSLAIKLQPSIIFIDEIDSFLRNRSSSDHEATAMMKAQFMSLWDGLDTDHSCQVIVMGATNRPQDLDSAIMRRMPTRFHINQPALKQREAILKLILKNENVDRHVDLLEVAQETDGFSGSDLKEMCRDAALLCVREYVNSTSEESHDEDEIRPVQQQDLHRAIEKMKKSKDAAFQNVLTHVCLD.

At 1–15 (MVHAETFSRPLSRNE) the chain is on the mitochondrial intermembrane side. The helical transmembrane segment at 16-32 (VVGLIFRLTIFGAVTYF) threads the bilayer. At 33-361 (TIKWMVDAID…QNVLTHVCLD (329 aa)) the chain is on the cytoplasmic side. 133–140 (GPPGCGKT) contributes to the ATP binding site. The residue at position 322 (S322) is a Phosphoserine.

Belongs to the AAA ATPase family. MSP1 subfamily. In terms of assembly, interacts with GRIA2 and GRIP1 in an ATP-dependent manner. ATAD1-catalyzed ATP hydrolysis disrupts not only its binding to GRIA2 and GRIP1, but also interaction between GRIP1 and GRIA2, leading to AMPAR complex disassembly.

The protein localises to the mitochondrion outer membrane. It is found in the peroxisome membrane. It localises to the postsynaptic cell membrane. The enzyme catalyses [protein]-with a C-terminal TM segment(out) + ATP + H2O = [protein]-with a C-terminal TM segment(in) + ADP + phosphate + H(+). Its function is as follows. Outer mitochondrial translocase required to remove mislocalized tail-anchored transmembrane proteins on mitochondria. Specifically recognizes and binds tail-anchored transmembrane proteins: acts as a dislocase that mediates the ATP-dependent extraction of mistargeted tail-anchored transmembrane proteins from the mitochondrion outer membrane. Also plays a critical role in regulating the surface expression of AMPA receptors (AMPAR), thereby regulating synaptic plasticity and learning and memory. Required for NMDA-stimulated AMPAR internalization and inhibition of GRIA1 and GRIA2 recycling back to the plasma membrane; these activities are ATPase-dependent. This Bos taurus (Bovine) protein is Outer mitochondrial transmembrane helix translocase.